The following is a 464-amino-acid chain: Chromosomal replication initiator protein DnaA (464 aa).

A domain I, interacts with DnaA modulators region spans residues methionine 1 to glutamate 82. Residues glutamate 82–glycine 125 form a domain II region. The domain III, AAA+ region stretch occupies residues glutamine 126–alanine 342. ATP-binding residues include glycine 170, glycine 172, lysine 173, and threonine 174. Residues asparagine 343–serine 464 are domain IV, binds dsDNA.

The protein belongs to the DnaA family. In terms of assembly, oligomerizes as a right-handed, spiral filament on DNA at oriC.

It is found in the cytoplasm. Its function is as follows. Plays an essential role in the initiation and regulation of chromosomal replication. ATP-DnaA binds to the origin of replication (oriC) to initiate formation of the DNA replication initiation complex once per cell cycle. Binds the DnaA box (a 9 base pair repeat at the origin) and separates the double-stranded (ds)DNA. Forms a right-handed helical filament on oriC DNA; dsDNA binds to the exterior of the filament while single-stranded (ss)DNA is stabiized in the filament's interior. The ATP-DnaA-oriC complex binds and stabilizes one strand of the AT-rich DNA unwinding element (DUE), permitting loading of DNA polymerase. After initiation quickly degrades to an ADP-DnaA complex that is not apt for DNA replication. Binds acidic phospholipids. This is Chromosomal replication initiator protein DnaA from Exiguobacterium sibiricum (strain DSM 17290 / CCUG 55495 / CIP 109462 / JCM 13490 / 255-15).